We begin with the raw amino-acid sequence, 145 residues long: Nucleoside diphosphate kinase (145 aa).

ATP contacts are provided by Lys-11, Phe-59, Arg-87, Thr-93, Arg-104, and Asn-114. Catalysis depends on His-117, which acts as the Pros-phosphohistidine intermediate.

The protein belongs to the NDK family. Mg(2+) serves as cofactor.

Its subcellular location is the cytoplasm. The catalysed reaction is a 2'-deoxyribonucleoside 5'-diphosphate + ATP = a 2'-deoxyribonucleoside 5'-triphosphate + ADP. It catalyses the reaction a ribonucleoside 5'-diphosphate + ATP = a ribonucleoside 5'-triphosphate + ADP. Its function is as follows. Major role in the synthesis of nucleoside triphosphates other than ATP. The ATP gamma phosphate is transferred to the NDP beta phosphate via a ping-pong mechanism, using a phosphorylated active-site intermediate. The protein is Nucleoside diphosphate kinase of Sulfolobus acidocaldarius (strain ATCC 33909 / DSM 639 / JCM 8929 / NBRC 15157 / NCIMB 11770).